A 569-amino-acid polypeptide reads, in one-letter code: MKQSKLLIPTLKEVPNDAEALSHQMMLRAGYIRQISAGMYAYLPLAYRVLTNIEKIIRQEMEKIDAAEMLVPAVIPAELWKATGRYETYGPELFKLKNRHDREFILGPTHEETFTSIVRDEIKSYKRLPLTLYQIQAKYRDEDRPRYGLLRGREFIMKDAYSFHADEASLDDTFQDMAQAYQNIFERVGLKFRSIIGDGGAMGGKDSREYSAIAPVGEDTIVYSDASDYAANLEMARSLYVPKKSHASLKDMEKIDTPGVGTIDELAEFLKVGADQLVKSILFIADDQPVMALVRGDHEVNDVKLKNYLGADFLEMATPEQAQQYLGASFGSLGPVNVHDDVKIVADQYVKDMVNITVGANEDGHHFTNVNPERDFHAEAYVDIRFVQEGELSPDGAGVLKFTKGIEIGHIFKLGTRYSKDLHAEVLDANGRNIPVIMGCYGIGVSRLLSAIAEQRADENGLIWPKAIAPFDVHVIPVNPKKADQVEVADQVEAQLEAAGYNVLYDDRKERPGVKFADSDLMGIPARITIGKKASEGIVEIKLRQTGETLEVKQEEIANNLAVLLKNID.

Belongs to the class-II aminoacyl-tRNA synthetase family. ProS type 1 subfamily. In terms of assembly, homodimer.

The protein localises to the cytoplasm. The enzyme catalyses tRNA(Pro) + L-proline + ATP = L-prolyl-tRNA(Pro) + AMP + diphosphate. Functionally, catalyzes the attachment of proline to tRNA(Pro) in a two-step reaction: proline is first activated by ATP to form Pro-AMP and then transferred to the acceptor end of tRNA(Pro). As ProRS can inadvertently accommodate and process non-cognate amino acids such as alanine and cysteine, to avoid such errors it has two additional distinct editing activities against alanine. One activity is designated as 'pretransfer' editing and involves the tRNA(Pro)-independent hydrolysis of activated Ala-AMP. The other activity is designated 'posttransfer' editing and involves deacylation of mischarged Ala-tRNA(Pro). The misacylated Cys-tRNA(Pro) is not edited by ProRS. This chain is Proline--tRNA ligase, found in Lactiplantibacillus plantarum (strain ATCC BAA-793 / NCIMB 8826 / WCFS1) (Lactobacillus plantarum).